The sequence spans 511 residues: Dopamine receptor 1 (511 aa).

Residues 1-19 (MYTPHPFGFLIILVPMTNA) form the signal peptide. Residues 20–142 (MRAIAAIAAG…EEPEPLSLVS (123 aa)) are Extracellular-facing. Residues Asn53, Asn63, Asn74, Asn117, and Asn123 are each glycosylated (N-linked (GlcNAc...) asparagine). The helical transmembrane segment at 143–169 (IVVVGIFLSVLIFLSVAGNILVCLAIY) threads the bilayer. The Cytoplasmic portion of the chain corresponds to 170–179 (TERSLRRIGN). A helical transmembrane segment spans residues 180–206 (LFLASLAIADLFVASLVMTFAGVNDLL). The Extracellular segment spans residues 207-216 (GYWIFGAQFC). The cysteines at positions 216 and 302 are disulfide-linked. The chain crosses the membrane as a helical span at residues 217–239 (DTWVAFDVMCSTASILNLCAISM). Residues 240 to 258 (DRYIHIKDPLRYGRWVTRR) are Cytoplasmic-facing. A helical membrane pass occupies residues 259–279 (VAVITIAAIWLLAAFVSFVPI). The Extracellular segment spans residues 280–310 (SLGIHRPDQPLIFEDNGKKYPTCALDLTPTY). A helical membrane pass occupies residues 311 to 331 (AVVSSCISFYFPCVVMIGIYC). Topologically, residues 332 to 391 (RLYCYAQKHVKSIKAVTRPGEVAEKQRYKSIRRPKNQPKKFKVRNLHTHSSPYHVSDHKA) are cytoplasmic. The chain crosses the membrane as a helical span at residues 392-412 (AVTVGVIMGVFLICWVPFFCV). Residues 413–427 (NITAAFCKTCIGGQT) lie on the Extracellular side of the membrane. The chain crosses the membrane as a helical span at residues 428–450 (FKILTWLGYSNSAFNPIIYSIFN). Residues 451–511 (KEFRDAFKRI…SAELEQVSAI (61 aa)) lie on the Cytoplasmic side of the membrane. S-palmitoyl cysteine attachment occurs at residues Cys468 and Cys469.

The protein belongs to the G-protein coupled receptor 1 family. As to expression, expressed in the larval and adult CNS in structures that mediate higher-order brain functions such as learning, memory and motor control: in the mushroom body neuropil and four unpaired neurons in each thoracic segment. The adult CNS has intense expression in the central complex, moderate expression in several neurosecretory cells, and weak expression in two unpaired neurons in the mesothoracic neuromere. Also seen in the somata of the optic lobes.

The protein localises to the cell membrane. Functionally, receptor for dopamine. The activity of this receptor is mediated by G proteins which activate adenylyl cyclase. Might be involved in the processing of visual information and/or visual learning. Important for Pavlovian conditioning: required in the mushroom body as a receptor conveying unconditional stimuli information, has a role in memory formation for aversive and appetitive learning. Sleep-deprivation-induced impairments in learning can be partially explained through alterations in dopamine signaling, Dop1R1 expression levels are reduced; sleep may have a role in restoring dopamine homeostasis. The sequence is that of Dopamine receptor 1 (Dop1R1) from Drosophila melanogaster (Fruit fly).